Here is a 261-residue protein sequence, read N- to C-terminus: Kallikrein 1-related peptidase b9 (261 aa).

The first 18 residues, 1–18, serve as a signal peptide directing secretion; that stretch reads MRFLILFLALSLGGIDAA. Residues 19–24 constitute a propeptide, activation peptide; it reads PPVHSR. Residues 25–258 form the Peptidase S1 domain; that stretch reads IVGGFKCEKN…FTSWIKDTMA (234 aa). Cystine bridges form between Cys31/Cys173, Cys50/Cys66, Cys152/Cys219, Cys184/Cys198, and Cys209/Cys234. The Charge relay system role is filled by His65. Residue Asn102 is glycosylated (N-linked (GlcNAc...) asparagine). Asp120 (charge relay system) is an active-site residue. Ser213 acts as the Charge relay system in catalysis.

Belongs to the peptidase S1 family. Kallikrein subfamily.

The catalysed reaction is Preferential cleavage of Arg-|-Xaa bonds in small molecule substrates. Highly selective action to release kallidin (lysyl-bradykinin) from kininogen involves hydrolysis of Met-|-Xaa or Leu-|-Xaa.. Its function is as follows. Glandular kallikreins cleave Met-Lys and Arg-Ser bonds in kininogen to release Lys-bradykinin. This chain is Kallikrein 1-related peptidase b9 (Klk1b9), found in Mus musculus (Mouse).